The chain runs to 328 residues: uncharacterized protein (328 aa).

Residues 10-55 (KMGFGHAMLLKMGWKGKGLGVEEDGRTEIIVNKKKQDKVGVGASIS) enclose the G-patch domain. The tract at residues 97 to 291 (EKITFKRTIK…KKSFSVSKTR (195 aa)) is disordered. Residues 101-110 (FKRTIKKNSK) are compositionally biased toward basic residues. A compositionally biased stretch (acidic residues) spans 116–126 (SDSDSDSDSES). Composition is skewed to low complexity over residues 141–158 (DSDS…SSSS) and 210–240 (SSSS…SSSE). The span at 248–257 (KNKNKNKNKK) shows a compositional bias: basic residues.

This is an uncharacterized protein from Dictyostelium discoideum (Social amoeba).